Reading from the N-terminus, the 236-residue chain is Lectin CPL (236 aa).

Residues E8 and D10 each contribute to the Mn(2+) site. Ca(2+)-binding residues include D10, Y12, N14, and D19. N14 lines the a carbohydrate pocket. Mn(2+) is bound by residues D19 and H24. A carbohydrate is bound by residues 99-100, D207, and R227; that span reads VY.

Belongs to the leguminous lectin family. As to quaternary structure, homotetramer; dimer of dimers. Post-translationally, concanavalin A-like lectins of the Diocleinae subtribe undergo proteolytic processing referred to as circular permutation. The propeptide is split into an N-terminal and a C-terminal part, the gamma and beta chain, respectively. These are then religated in beta-gamma order to form the mature alpha chain. The beta and gamma chains can often be detected in cell extracts. Residues 1-118 of the mature chain, as displayed here, probably constitute the beta chain in the propeptide, residues 119-236 the gamma chain.

Its function is as follows. D-mannose/D-glucose-binding lectin that also binds derivative alpha-methyl-D-mannppyranoside. Has hemagglutinating activity towards rabbit erythrocytes. The polypeptide is Lectin CPL (Bionia pedicellata (Camptosema pedicellatum)).